Consider the following 515-residue polypeptide: Protein translocase subunit SecD (515 aa).

Helical transmembrane passes span 5-25 (LIAK…LATP), 353-373 (KGIL…VAYY), 375-395 (LSGL…MGLL), 398-418 (FGAT…GIAV), 450-470 (FSTI…LFQF), and 477-497 (GFAV…ILCT).

Belongs to the SecD/SecF family. SecD subfamily. In terms of assembly, forms a complex with SecF. Part of the essential Sec protein translocation apparatus which comprises SecA, SecYEG and auxiliary proteins SecDF. Other proteins may also be involved.

The protein localises to the cell inner membrane. Part of the Sec protein translocase complex. Interacts with the SecYEG preprotein conducting channel. SecDF uses the proton motive force (PMF) to complete protein translocation after the ATP-dependent function of SecA. The sequence is that of Protein translocase subunit SecD from Desulfurispirillum indicum (strain ATCC BAA-1389 / DSM 22839 / S5).